The following is a 209-amino-acid chain: Orotate phosphoribosyltransferase (209 aa).

5-phospho-alpha-D-ribose 1-diphosphate-binding positions include arginine 96, lysine 100, histidine 102, and 122-130; that span reads EDLISTGGS. Serine 126 provides a ligand contact to orotate.

It belongs to the purine/pyrimidine phosphoribosyltransferase family. PyrE subfamily. In terms of assembly, homodimer. The cofactor is Mg(2+).

The catalysed reaction is orotidine 5'-phosphate + diphosphate = orotate + 5-phospho-alpha-D-ribose 1-diphosphate. It participates in pyrimidine metabolism; UMP biosynthesis via de novo pathway; UMP from orotate: step 1/2. Functionally, catalyzes the transfer of a ribosyl phosphate group from 5-phosphoribose 1-diphosphate to orotate, leading to the formation of orotidine monophosphate (OMP). The chain is Orotate phosphoribosyltransferase from Listeria monocytogenes serotype 4b (strain F2365).